A 99-amino-acid polypeptide reads, in one-letter code: Nucleoid-associated protein SEQ_0368 (99 aa).

This sequence belongs to the YbaB/EbfC family. As to quaternary structure, homodimer.

The protein resides in the cytoplasm. It is found in the nucleoid. In terms of biological role, binds to DNA and alters its conformation. May be involved in regulation of gene expression, nucleoid organization and DNA protection. The sequence is that of Nucleoid-associated protein SEQ_0368 from Streptococcus equi subsp. equi (strain 4047).